Here is a 147-residue protein sequence, read N- to C-terminus: 3-dehydroquinate dehydratase 2 (147 aa).

Catalysis depends on Y23, which acts as the Proton acceptor. The substrate site is built by N74, H80, and D87. Residue H100 is the Proton donor of the active site. Residues 101–102 (IS) and R111 contribute to the substrate site.

The protein belongs to the type-II 3-dehydroquinase family. As to quaternary structure, homododecamer.

The enzyme catalyses 3-dehydroquinate = 3-dehydroshikimate + H2O. It participates in metabolic intermediate biosynthesis; chorismate biosynthesis; chorismate from D-erythrose 4-phosphate and phosphoenolpyruvate: step 3/7. Functionally, catalyzes a trans-dehydration via an enolate intermediate. This chain is 3-dehydroquinate dehydratase 2 (aroQ2), found in Agrobacterium fabrum (strain C58 / ATCC 33970) (Agrobacterium tumefaciens (strain C58)).